The following is a 1129-amino-acid chain: Eukaryotic translation initiation factor 3 subunit A (1129 aa).

A PCI domain is found at 319–502 (LQRMAAHVLL…NSIYFGTDLT (184 aa)). Disordered regions lie at residues 590–633 (NNAR…NEIQ) and 836–1129 (AAEA…VKRR). Basic and acidic residues-rich tracts occupy residues 836–903 (AAEA…RSER), 923–964 (DRND…KDTD), 971–985 (WRVRREPVEPQRERG), 994–1044 (GRDD…DQPQ), and 1053–1076 (DSPRQNDRDNRDNRRPAGDRRDIR). The span at 1080 to 1091 (PKEGGGGGGGGN) shows a compositional bias: gly residues. The segment covering 1098-1119 (PRDEKPPVKRDQPQDKENKAGD) has biased composition (basic and acidic residues).

Belongs to the eIF-3 subunit A family. As to quaternary structure, component of the eukaryotic translation initiation factor 3 (eIF-3) complex. The eIF-3 complex interacts with pix.

The protein resides in the cytoplasm. Its function is as follows. RNA-binding component of the eukaryotic translation initiation factor 3 (eIF-3) complex, which is involved in protein synthesis of a specialized repertoire of mRNAs and, together with other initiation factors, stimulates binding of mRNA and methionyl-tRNAi to the 40S ribosome. The eIF-3 complex specifically targets and initiates translation of a subset of mRNAs involved in cell proliferation. This chain is Eukaryotic translation initiation factor 3 subunit A, found in Drosophila mojavensis (Fruit fly).